The primary structure comprises 245 residues: NAD-dependent protein deacylase (245 aa).

The 245-residue stretch at 1 to 245 (MEAVWESARI…RLSRAMGIDI (245 aa)) folds into the Deacetylase sirtuin-type domain. 22–41 (GAGISAESGIPTFRGKDGLW) serves as a coordination point for NAD(+). Positions 66 and 69 each coordinate substrate. Residue 100–103 (QNVD) participates in NAD(+) binding. Histidine 118 serves as the catalytic Proton acceptor. Residues cysteine 126, cysteine 129, cysteine 146, and cysteine 149 each contribute to the Zn(2+) site. Residues 186–188 (GTS), 212–214 (NPE), and methionine 241 contribute to the NAD(+) site.

This sequence belongs to the sirtuin family. Class III subfamily. Zn(2+) serves as cofactor.

It is found in the cytoplasm. The enzyme catalyses N(6)-acetyl-L-lysyl-[protein] + NAD(+) + H2O = 2''-O-acetyl-ADP-D-ribose + nicotinamide + L-lysyl-[protein]. It carries out the reaction N(6)-succinyl-L-lysyl-[protein] + NAD(+) + H2O = 2''-O-succinyl-ADP-D-ribose + nicotinamide + L-lysyl-[protein]. Functionally, NAD-dependent lysine deacetylase and desuccinylase that specifically removes acetyl and succinyl groups on target proteins. Modulates the activities of several proteins which are inactive in their acylated form. Deacetylates the N-terminal lysine residue of Alba, the major archaeal chromatin protein and that, in turn, increases Alba's DNA binding affinity, thereby repressing transcription. The chain is NAD-dependent protein deacylase from Aeropyrum pernix (strain ATCC 700893 / DSM 11879 / JCM 9820 / NBRC 100138 / K1).